The primary structure comprises 479 residues: Adenosylhomocysteinase (479 aa).

3 residues coordinate substrate: Thr-56, Asp-134, and Glu-200. Position 201–203 (201–203 (TTT)) interacts with NAD(+). Substrate contacts are provided by Lys-230 and Asp-234. NAD(+) contacts are provided by residues Asn-235, 264–269 (GYGDVG), Glu-287, Asn-322, 343–345 (IGH), and Asn-391.

This sequence belongs to the adenosylhomocysteinase family. As to quaternary structure, homotetramer. The cofactor is NAD(+).

The catalysed reaction is S-adenosyl-L-homocysteine + H2O = L-homocysteine + adenosine. It functions in the pathway amino-acid biosynthesis; L-homocysteine biosynthesis; L-homocysteine from S-adenosyl-L-homocysteine: step 1/1. In terms of biological role, adenosylhomocysteine is a competitive inhibitor of S-adenosyl-L-methionine-dependent methyl transferase reactions; therefore adenosylhomocysteinase may play a key role in the control of methylations via regulation of the intracellular concentration of adenosylhomocysteine. The polypeptide is Adenosylhomocysteinase (Plasmodium falciparum (isolate 3D7)).